Reading from the N-terminus, the 340-residue chain is Glycerol-3-phosphate dehydrogenase [NAD(P)+] (340 aa).

5 residues coordinate NADPH: serine 23, tryptophan 24, arginine 43, lysine 44, and lysine 113. The sn-glycerol 3-phosphate site is built by lysine 113, glycine 141, and threonine 143. Alanine 145 contributes to the NADPH binding site. Positions 196, 249, 259, 260, and 261 each coordinate sn-glycerol 3-phosphate. Lysine 196 serves as the catalytic Proton acceptor. Arginine 260 contacts NADPH. Position 286 (glutamate 286) interacts with NADPH.

This sequence belongs to the NAD-dependent glycerol-3-phosphate dehydrogenase family.

It localises to the cytoplasm. The enzyme catalyses sn-glycerol 3-phosphate + NAD(+) = dihydroxyacetone phosphate + NADH + H(+). The catalysed reaction is sn-glycerol 3-phosphate + NADP(+) = dihydroxyacetone phosphate + NADPH + H(+). It participates in membrane lipid metabolism; glycerophospholipid metabolism. Catalyzes the reduction of the glycolytic intermediate dihydroxyacetone phosphate (DHAP) to sn-glycerol 3-phosphate (G3P), the key precursor for phospholipid synthesis. This chain is Glycerol-3-phosphate dehydrogenase [NAD(P)+], found in Zymomonas mobilis subsp. mobilis (strain ATCC 31821 / ZM4 / CP4).